The chain runs to 210 residues: Large ribosomal subunit protein uL3 (210 aa).

The disordered stretch occupies residues 133–156 (ASHGNSLSHRVPGSIGQNQTPGKV). At Gln-151 the chain carries N5-methylglutamine.

This sequence belongs to the universal ribosomal protein uL3 family. Part of the 50S ribosomal subunit. Forms a cluster with proteins L14 and L19. Methylated by PrmB.

One of the primary rRNA binding proteins, it binds directly near the 3'-end of the 23S rRNA, where it nucleates assembly of the 50S subunit. The sequence is that of Large ribosomal subunit protein uL3 from Hamiltonella defensa subsp. Acyrthosiphon pisum (strain 5AT).